We begin with the raw amino-acid sequence, 376 residues long: tRNA-specific 2-thiouridylase MnmA (376 aa).

Residues 17–24 (GMSGGVDS) and Met43 each bind ATP. An interaction with target base in tRNA region spans residues 103–105 (NPD). Catalysis depends on Cys108, which acts as the Nucleophile. Cys108 and Cys205 are joined by a disulfide. Residue Gly132 coordinates ATP. The tract at residues 155–157 (KDQ) is interaction with tRNA. The Cysteine persulfide intermediate role is filled by Cys205. The segment at 315-316 (RY) is interaction with tRNA.

This sequence belongs to the MnmA/TRMU family.

The protein localises to the cytoplasm. It catalyses the reaction S-sulfanyl-L-cysteinyl-[protein] + uridine(34) in tRNA + AH2 + ATP = 2-thiouridine(34) in tRNA + L-cysteinyl-[protein] + A + AMP + diphosphate + H(+). In terms of biological role, catalyzes the 2-thiolation of uridine at the wobble position (U34) of tRNA, leading to the formation of s(2)U34. The polypeptide is tRNA-specific 2-thiouridylase MnmA (Dichelobacter nodosus (strain VCS1703A)).